We begin with the raw amino-acid sequence, 70 residues long: Metallothionein-like protein 1 (70 aa).

The protein belongs to the metallothionein superfamily. Type 15 family.

Functionally, metallothioneins have a high content of cysteine residues that bind various heavy metals. In Festuca rubra (Red fescue), this protein is Metallothionein-like protein 1 (MT1).